A 113-amino-acid polypeptide reads, in one-letter code: Thioredoxin H-type (113 aa).

One can recognise a Thioredoxin domain in the interval 2–112; sequence GGSVIVIDSK…LKALVAKHAA (111 aa). Active-site nucleophile residues include C37 and C40. An intrachain disulfide couples C37 to C40.

Belongs to the thioredoxin family. Plant H-type subfamily.

Its subcellular location is the cytoplasm. Participates in various redox reactions through the reversible oxidation of the active center dithiol to a disulfide. The H form is known to activate a number of cytosolic enzymes. This chain is Thioredoxin H-type (TRXH), found in Chlamydomonas reinhardtii (Chlamydomonas smithii).